Consider the following 392-residue polypeptide: 1-deoxy-D-xylulose 5-phosphate reductoisomerase (392 aa).

T10, G11, S12, I13, and N124 together coordinate NADPH. K125 contacts 1-deoxy-D-xylulose 5-phosphate. Residue E126 participates in NADPH binding. D150 is a binding site for Mn(2+). 1-deoxy-D-xylulose 5-phosphate contacts are provided by S151, E152, S180, and H203. E152 is a binding site for Mn(2+). G209 is an NADPH binding site. Residues S216, N221, K222, and E225 each coordinate 1-deoxy-D-xylulose 5-phosphate. Residue E225 coordinates Mn(2+).

Belongs to the DXR family. Mg(2+) serves as cofactor. The cofactor is Mn(2+).

The catalysed reaction is 2-C-methyl-D-erythritol 4-phosphate + NADP(+) = 1-deoxy-D-xylulose 5-phosphate + NADPH + H(+). Its pathway is isoprenoid biosynthesis; isopentenyl diphosphate biosynthesis via DXP pathway; isopentenyl diphosphate from 1-deoxy-D-xylulose 5-phosphate: step 1/6. In terms of biological role, catalyzes the NADPH-dependent rearrangement and reduction of 1-deoxy-D-xylulose-5-phosphate (DXP) to 2-C-methyl-D-erythritol 4-phosphate (MEP). This Saccharophagus degradans (strain 2-40 / ATCC 43961 / DSM 17024) protein is 1-deoxy-D-xylulose 5-phosphate reductoisomerase.